The sequence spans 260 residues: Opacity protein opA58 (260 aa).

A signal peptide spans 1–23; that stretch reads MNPAPKKPSLLFSSLLFSSAAQA.

It belongs to the opacity porin family.

It is found in the cell outer membrane. Functionally, implicated in a number of adherence functions. OPA proteins are implicated in pathogenesis and are subject to phase variation. In Neisseria gonorrhoeae, this protein is Opacity protein opA58 (opaJ).